Here is a 122-residue protein sequence, read N- to C-terminus: Large ribosomal subunit protein uL14 (122 aa).

Belongs to the universal ribosomal protein uL14 family. Part of the 50S ribosomal subunit. Forms a cluster with proteins L3 and L19. In the 70S ribosome, L14 and L19 interact and together make contacts with the 16S rRNA in bridges B5 and B8.

Its function is as follows. Binds to 23S rRNA. Forms part of two intersubunit bridges in the 70S ribosome. The chain is Large ribosomal subunit protein uL14 from Mesomycoplasma hyopneumoniae (strain 232) (Mycoplasma hyopneumoniae).